A 336-amino-acid chain; its full sequence is Holliday junction branch migration complex subunit RuvB (336 aa).

Residues 4–185 form a large ATPase domain (RuvB-L) region; that stretch reads MDERLLSGES…FGVLSRLEYY (182 aa). Residues Leu24, Arg25, Gly66, Lys69, Thr70, Thr71, 132-134, Arg175, Tyr185, and Arg222 each bind ATP; that span reads EDF. Residue Thr70 coordinates Mg(2+). The segment at 186-256 is small ATPAse domain (RuvB-S); it reads TVDQLSAIVE…ITQMALELLQ (71 aa). Positions 259-336 are head domain (RuvB-H); sequence KLGLDHIDHK…EHFGMEMPKV (78 aa). Residues Arg314 and Arg319 each coordinate DNA.

This sequence belongs to the RuvB family. In terms of assembly, homohexamer. Forms an RuvA(8)-RuvB(12)-Holliday junction (HJ) complex. HJ DNA is sandwiched between 2 RuvA tetramers; dsDNA enters through RuvA and exits via RuvB. An RuvB hexamer assembles on each DNA strand where it exits the tetramer. Each RuvB hexamer is contacted by two RuvA subunits (via domain III) on 2 adjacent RuvB subunits; this complex drives branch migration. In the full resolvosome a probable DNA-RuvA(4)-RuvB(12)-RuvC(2) complex forms which resolves the HJ.

The protein resides in the cytoplasm. It carries out the reaction ATP + H2O = ADP + phosphate + H(+). The RuvA-RuvB-RuvC complex processes Holliday junction (HJ) DNA during genetic recombination and DNA repair, while the RuvA-RuvB complex plays an important role in the rescue of blocked DNA replication forks via replication fork reversal (RFR). RuvA specifically binds to HJ cruciform DNA, conferring on it an open structure. The RuvB hexamer acts as an ATP-dependent pump, pulling dsDNA into and through the RuvAB complex. RuvB forms 2 homohexamers on either side of HJ DNA bound by 1 or 2 RuvA tetramers; 4 subunits per hexamer contact DNA at a time. Coordinated motions by a converter formed by DNA-disengaged RuvB subunits stimulates ATP hydrolysis and nucleotide exchange. Immobilization of the converter enables RuvB to convert the ATP-contained energy into a lever motion, pulling 2 nucleotides of DNA out of the RuvA tetramer per ATP hydrolyzed, thus driving DNA branch migration. The RuvB motors rotate together with the DNA substrate, which together with the progressing nucleotide cycle form the mechanistic basis for DNA recombination by continuous HJ branch migration. Branch migration allows RuvC to scan DNA until it finds its consensus sequence, where it cleaves and resolves cruciform DNA. The sequence is that of Holliday junction branch migration complex subunit RuvB from Bacillus cereus (strain ZK / E33L).